The chain runs to 353 residues: Putative glycosyltransferase TagX (353 aa).

Belongs to the glycosyltransferase 2 family.

In Staphylococcus aureus (strain MRSA252), this protein is Putative glycosyltransferase TagX (tagX).